We begin with the raw amino-acid sequence, 536 residues long: T-complex protein 1 subunit delta (536 aa).

The segment covering methionine 1–lysine 15 has biased composition (polar residues). The tract at residues methionine 1–lysine 26 is disordered. Glycine 50 provides a ligand contact to ADP. ATP is bound at residue glycine 50. A Mg(2+)-binding site is contributed by aspartate 101. ADP is bound by residues glycine 102, threonine 103, threonine 104, serine 105, serine 170, lysine 171, glycine 422, and glutamine 507. Positions 102 and 103 each coordinate ATP. Position 171 (lysine 171) interacts with ATP.

This sequence belongs to the TCP-1 chaperonin family. As to quaternary structure, component of the chaperonin-containing T-complex (TRiC), a hexadecamer composed of two identical back-to-back stacked rings enclosing a protein folding chamber. Each ring is made up of eight different subunits: TCP1/CCT1, CCT2, CCT3, CCT4, CCT5, CCT6A/CCT6, CCT7, CCT8.

The protein localises to the cytoplasm. It catalyses the reaction ATP + H2O = ADP + phosphate + H(+). Its function is as follows. Component of the chaperonin-containing T-complex (TRiC), a molecular chaperone complex that assists the folding of actin, tubulin and other proteins upon ATP hydrolysis. The protein is T-complex protein 1 subunit delta (cct4) of Takifugu rubripes (Japanese pufferfish).